A 309-amino-acid polypeptide reads, in one-letter code: Probable manganese-dependent inorganic pyrophosphatase (309 aa).

Mn(2+) contacts are provided by His-9, Asp-13, Asp-15, Asp-75, His-97, and Asp-149.

The protein belongs to the PPase class C family. Mn(2+) serves as cofactor.

The protein localises to the cytoplasm. It catalyses the reaction diphosphate + H2O = 2 phosphate + H(+). This chain is Probable manganese-dependent inorganic pyrophosphatase, found in Bacillus mycoides (strain KBAB4) (Bacillus weihenstephanensis).